Reading from the N-terminus, the 257-residue chain is Ras-related protein Rab-26 (257 aa).

A disordered region spans residues 1–53 (MSRKKTPKSKGGSVPAASTLPAAANGPRLAHPRTARPGPEAPPNGPPQSGRPS). GTP contacts are provided by Ser-73, Gly-74, Val-75, Gly-76, Lys-77, Thr-78, Cys-79, Ser-96, and Thr-97. Residue Thr-78 participates in Mg(2+) binding. Short sequence motifs (switch) lie at residues 87-102 (GAFL…GIDF) and 120-137 (DTAG…YYRD). Positions 97 and 120 each coordinate Mg(2+). GTP-binding residues include Gly-123, Asn-178, Lys-179, Asp-181, Ala-209, and Lys-210. Residues Cys-254 and Cys-255 are each lipidated (S-geranylgeranyl cysteine).

It belongs to the small GTPase superfamily. Rab family. Interacts with ADRA2B. Interacts with RIMS1. Requires Mg(2+) as cofactor. In terms of tissue distribution, expressed in pancreas, kidney, brain, submandibular gland, and lung.

Its subcellular location is the cytoplasmic vesicle. The protein resides in the secretory vesicle membrane. The protein localises to the golgi apparatus membrane. It carries out the reaction GTP + H2O = GDP + phosphate + H(+). With respect to regulation, regulated by guanine nucleotide exchange factors (GEFs) which promote the exchange of bound GDP for free GTP. Regulated by GTPase activating proteins (GAPs) which increase the GTP hydrolysis activity. Inhibited by GDP dissociation inhibitors (GDIs). Functionally, the small GTPases Rab are key regulators of intracellular membrane trafficking, from the formation of transport vesicles to their fusion with membranes. Rabs cycle between an inactive GDP-bound form and an active GTP-bound form that is able to recruit to membranes different set of downstream effectors directly responsible for vesicle formation, movement, tethering and fusion. RAB26 mediates transport of ADRA2A and ADRA2B from the Golgi to the cell membrane. Plays a role in the maturation of zymogenic granules and in pepsinogen secretion in the stomach. Plays a role in the secretion of amylase from acinar granules in the parotid gland. This chain is Ras-related protein Rab-26, found in Rattus norvegicus (Rat).